A 490-amino-acid chain; its full sequence is Glutamyl-tRNA(Gln) amidotransferase subunit A (490 aa).

Catalysis depends on charge relay system residues lysine 78 and serine 158. Positions serine 131 to serine 159 are disordered. Serine 182 (acyl-ester intermediate) is an active-site residue.

This sequence belongs to the amidase family. GatA subfamily. In terms of assembly, heterotrimer of A, B and C subunits.

It carries out the reaction L-glutamyl-tRNA(Gln) + L-glutamine + ATP + H2O = L-glutaminyl-tRNA(Gln) + L-glutamate + ADP + phosphate + H(+). In terms of biological role, allows the formation of correctly charged Gln-tRNA(Gln) through the transamidation of misacylated Glu-tRNA(Gln) in organisms which lack glutaminyl-tRNA synthetase. The reaction takes place in the presence of glutamine and ATP through an activated gamma-phospho-Glu-tRNA(Gln). The protein is Glutamyl-tRNA(Gln) amidotransferase subunit A of Hyphomonas neptunium (strain ATCC 15444).